The primary structure comprises 861 residues: Extra-large guanine nucleotide-binding protein 2 (861 aa).

2 disordered regions span residues 1-32 (MAAV…TSSG) and 121-168 (VSGS…DDRV). Residues 131-143 (KRLDVPEEVKSPA) are compositionally biased toward basic and acidic residues. A compositionally biased stretch (low complexity) spans 146 to 156 (RLSPSSPLSAS). The span at 157–168 (AREEDHLDDDRV) shows a compositional bias: basic and acidic residues. The Nuclear localization signal motif lies at 204 to 211 (RAERKGKR). The segment at 214-257 (CYRCQLGNRFTEKEVCIVCDAKYCFNCVRRAMGAMPEGRKCQAC) adopts an RING-type; degenerate zinc-finger fold. Residues 461–853 (MLNKLLLIGS…TSMFQEMSTT (393 aa)) form the G-alpha domain. Positions 464-477 (KLLLIGSEKGGATT) are G1 motif. 469–477 (GSEKGGATT) serves as a coordination point for GTP. A Ca(2+)-binding site is contributed by threonine 476. Positions 523–545 (EMSNDQSSGNVGDETSAKPGNSI) are disordered. 624–632 (DILQAEGLS) serves as a coordination point for GTP. The segment at 624–632 (DILQAEGLS) is G2 motif. Serine 632 provides a ligand contact to Ca(2+). The interval 665–674 (YQLIRLNPRS) is G3 motif. The G4 motif stretch occupies residues 737 to 744 (LLVLTKFD). A GTP-binding site is contributed by 741-744 (TKFD). The tract at residues 818-823 (QVSLES) is G5 motif.

The protein belongs to the G-alpha family. XLG subfamily. In terms of assembly, interacts with GB1. Component of a G-protein complex at least composed of XLG2 and GB1. Interacts with RTV1. Requires Ca(2+) as cofactor. Ubiquitous. Strongly expressed in vascular tissues, root and shoot meristems and lateral root primordia.

The protein resides in the nucleus. Functionally, guanine nucleotide-binding proteins (G proteins) are involved as modulators or transducers in various transmembrane signaling systems. Binds GTP with specificity. Plays a role in the root morphogenesis by regulation of the cell proliferation. Acts as a positive regulator in resistance to pathogen that triggers the salicylic acid (SA) pathway. Promotes the DNA binding activity of RTV1 specifically to promoter regions of FT and SOC1 in vivo leading to the activation of floral integrator genes. The polypeptide is Extra-large guanine nucleotide-binding protein 2 (XLG2) (Arabidopsis thaliana (Mouse-ear cress)).